The primary structure comprises 161 residues: uncharacterized protein (161 aa).

4 helical membrane passes run 22 to 42 (LFFINVGLAAVAMLVAGVFGH), 43 to 63 (LTVGMFLGLGLLLGLLNALLV), 89 to 109 (LAIITILGLIIAYIFRPAGLG), and 110 to 130 (VVFGLAFFQVLLVATTALPVL). The disordered stretch occupies residues 141–161 (VATYSSNGQTGGSEGRSASDD).

It to M.leprae ML1138.

Its subcellular location is the cell membrane. This is an uncharacterized protein from Mycobacterium bovis (strain ATCC BAA-935 / AF2122/97).